The following is a 235-amino-acid chain: Small ribosomal subunit protein uS3 (235 aa).

The KH type-2 domain maps to 39-107 (VRKFLNKELA…PAQINIAEVK (69 aa)). A disordered region spans residues 215–235 (AQSEQQPADKPKKAPRGKGRK).

This sequence belongs to the universal ribosomal protein uS3 family. As to quaternary structure, part of the 30S ribosomal subunit. Forms a tight complex with proteins S10 and S14.

Functionally, binds the lower part of the 30S subunit head. Binds mRNA in the 70S ribosome, positioning it for translation. This chain is Small ribosomal subunit protein uS3, found in Haemophilus influenzae (strain PittEE).